Here is a 65-residue protein sequence, read N- to C-terminus: Metallothionein-3 (65 aa).

The residue at position 1 (Met-1) is an N-acetylmethionine. Residues 1–30 (MDPEACPCPTGGSCTCSDSCKCEGCTCASS) are beta. A divalent metal cation-binding residues include Cys-6, Cys-8, Cys-14, Cys-16, Cys-20, Cys-22, Cys-25, and Cys-27. Positions 31-65 (KKSCCPAECEKCAKDCVCKGGEGAEAEEKKCGCCQ) are alpha. At Ser-33 the chain carries Phosphoserine. Positions 34, 35, 39, 42, 46, 48, 61, 63, and 64 each coordinate a divalent metal cation.

The protein belongs to the metallothionein superfamily. Type 1 family.

Binds heavy metals. Contains five zinc and one copper atoms per polypeptide chain and only a negligible amount of cadmium. This chain is Metallothionein-3 (MT3), found in Ovis aries (Sheep).